Here is a 724-residue protein sequence, read N- to C-terminus: Catalase-peroxidase (724 aa).

Positions 98 to 226 (WHAAGTYRIA…LAAVMMGLIY (129 aa)) form a cross-link, tryptophyl-tyrosyl-methioninium (Trp-Tyr) (with M-252). His-99 serves as the catalytic Proton acceptor. The segment at residues 226–252 (YVNPEGVDGNPDPLKTAHDIRVTFERM) is a cross-link (tryptophyl-tyrosyl-methioninium (Tyr-Met) (with W-98)). Residue His-267 coordinates heme b.

It belongs to the peroxidase family. Peroxidase/catalase subfamily. As to quaternary structure, homodimer or homotetramer. Heme b serves as cofactor. Formation of the three residue Trp-Tyr-Met cross-link is important for the catalase, but not the peroxidase activity of the enzyme.

It catalyses the reaction H2O2 + AH2 = A + 2 H2O. It carries out the reaction 2 H2O2 = O2 + 2 H2O. Bifunctional enzyme with both catalase and broad-spectrum peroxidase activity. This chain is Catalase-peroxidase, found in Psychromonas ingrahamii (strain DSM 17664 / CCUG 51855 / 37).